Consider the following 235-residue polypeptide: Lipoprotein-releasing system ATP-binding protein LolD (235 aa).

The 231-residue stretch at 5–235 (LECRDIRKVY…LMTESASVEG (231 aa)) folds into the ABC transporter domain. An ATP-binding site is contributed by 41-48 (GSSGSGKS).

This sequence belongs to the ABC transporter superfamily. Lipoprotein translocase (TC 3.A.1.125) family. As to quaternary structure, the complex is composed of two ATP-binding proteins (LolD) and two transmembrane proteins (LolC and LolE).

It is found in the cell inner membrane. Functionally, part of the ABC transporter complex LolCDE involved in the translocation of mature outer membrane-directed lipoproteins, from the inner membrane to the periplasmic chaperone, LolA. Responsible for the formation of the LolA-lipoprotein complex in an ATP-dependent manner. The sequence is that of Lipoprotein-releasing system ATP-binding protein LolD from Vibrio parahaemolyticus serotype O3:K6 (strain RIMD 2210633).